We begin with the raw amino-acid sequence, 452 residues long: Pup--protein ligase (452 aa).

Residue Glu9 coordinates Mg(2+). Arg53 provides a ligand contact to ATP. Tyr55 is a binding site for Mg(2+). Asp57 serves as the catalytic Proton acceptor. Glu63 provides a ligand contact to Mg(2+). ATP contacts are provided by Thr66 and Trp419.

It belongs to the Pup ligase/Pup deamidase family. Pup-conjugating enzyme subfamily.

The catalysed reaction is ATP + [prokaryotic ubiquitin-like protein]-L-glutamate + [protein]-L-lysine = ADP + phosphate + N(6)-([prokaryotic ubiquitin-like protein]-gamma-L-glutamyl)-[protein]-L-lysine.. It participates in protein degradation; proteasomal Pup-dependent pathway. The protein operates within protein modification; protein pupylation. Catalyzes the covalent attachment of the prokaryotic ubiquitin-like protein modifier Pup to the proteasomal substrate proteins, thereby targeting them for proteasomal degradation. This tagging system is termed pupylation. The ligation reaction involves the side-chain carboxylate of the C-terminal glutamate of Pup and the side-chain amino group of a substrate lysine. The chain is Pup--protein ligase from Acidothermus cellulolyticus (strain ATCC 43068 / DSM 8971 / 11B).